The following is a 402-amino-acid chain: uncharacterized protein (402 aa).

The next 9 membrane-spanning stretches (helical) occupy residues 13–33, 68–88, 108–128, 149–169, 223–243, 261–281, 283–303, 327–347, and 353–373; these read IGVL…VNLA, FFIQ…GMVV, LMAL…GDIL, LLIW…LTSF, LNYF…AAAA, LWMA…VTDK, ICLL…VVYL, YLMQ…GLYG, and AGVL…HLWL.

The protein resides in the cell membrane. Functionally, involved in transport. This is an uncharacterized protein from Bacillus subtilis (strain 168).